Reading from the N-terminus, the 92-residue chain is Small ribosomal subunit protein uS19 (92 aa).

It belongs to the universal ribosomal protein uS19 family.

Protein S19 forms a complex with S13 that binds strongly to the 16S ribosomal RNA. This Phenylobacterium zucineum (strain HLK1) protein is Small ribosomal subunit protein uS19.